The primary structure comprises 956 residues: Translation initiation factor IF-2 (956 aa).

Residues 68–357 are disordered; sequence APEAAAPKAP…GVSVPRGDGN (290 aa). Composition is skewed to low complexity over residues 86-123, 141-156, 164-175, and 212-235; these read AKPAEAQASVKPVETQAPATPAAAKAAATPVAPAAPAV, PGNNPFATSQGMPRAG, PAAAPASGAGRP, and GPRPAAGSGGPRPAAGSGGPRPAA. 2 stretches are compositionally biased toward gly residues: residues 236–257 and 276–324; these read GSGGPRPGAGSGASRPGGGGGN and RGAG…GAGR. Over residues 325–334 the composition is skewed to basic residues; that stretch reads GKQRKSKRAK. The tr-type G domain maps to 449 to 620; it reads ARPPVVTVMG…AVMLTADAAL (172 aa). The segment at 458 to 465 is G1; the sequence is GHVDHGKT. 458-465 lines the GTP pocket; that stretch reads GHVDHGKT. Residues 483-487 form a G2 region; it reads GITQH. The segment at 508-511 is G3; that stretch reads DTPG. Residues 508–512 and 562–565 contribute to the GTP site; these read DTPGH and NKID. The segment at 562–565 is G4; it reads NKID. The G5 stretch occupies residues 598–600; the sequence is SAR.

Belongs to the TRAFAC class translation factor GTPase superfamily. Classic translation factor GTPase family. IF-2 subfamily.

Its subcellular location is the cytoplasm. Functionally, one of the essential components for the initiation of protein synthesis. Protects formylmethionyl-tRNA from spontaneous hydrolysis and promotes its binding to the 30S ribosomal subunits. Also involved in the hydrolysis of GTP during the formation of the 70S ribosomal complex. The sequence is that of Translation initiation factor IF-2 from Renibacterium salmoninarum (strain ATCC 33209 / DSM 20767 / JCM 11484 / NBRC 15589 / NCIMB 2235).